Reading from the N-terminus, the 660-residue chain is Probable rhamnogalacturonate lyase B (660 aa).

The signal sequence occupies residues 1–20; that stretch reads MRLSVSLGLASLWTAIGATA. N22, N27, N109, N142, N238, N284, N432, N492, N532, N594, and N635 each carry an N-linked (GlcNAc...) asparagine glycan.

This sequence belongs to the polysaccharide lyase 4 family.

It is found in the secreted. It catalyses the reaction Endotype eliminative cleavage of L-alpha-rhamnopyranosyl-(1-&gt;4)-alpha-D-galactopyranosyluronic acid bonds of rhamnogalacturonan I domains in ramified hairy regions of pectin leaving L-rhamnopyranose at the reducing end and 4-deoxy-4,5-unsaturated D-galactopyranosyluronic acid at the non-reducing end.. Pectinolytic enzymes consist of four classes of enzymes: pectin lyase, polygalacturonase, pectin methylesterase and rhamnogalacturonase. Degrades the rhamnogalacturonan I (RG-I) backbone of pectin. In Aspergillus terreus (strain NIH 2624 / FGSC A1156), this protein is Probable rhamnogalacturonate lyase B (rglB).